Reading from the N-terminus, the 227-residue chain is Lysosomal-associated transmembrane protein 4B (227 aa).

4 helical membrane passes run 26-46 (ILLG…LLSA), 72-92 (MCIA…ATYG), 100-120 (WIIP…LVAI), and 153-173 (CLVL…GYLI). A required for NEDD4 interaction region spans residues 205–222 (PPYDDATAVTGTAKEPPP).

Belongs to the LAPTM4/LAPTM5 transporter family. Homooligomer; upon reaching the lysosomes. Interacts with MCOLN1. Interacts with NEDD4; may play a role in the lysosomal sorting of LAPTM4B; enhances HGS association with NEDD4; mediates inhibition of EGFR degradation. Interacts with PIP5K1C; promotes SNX5 association with LAPTM4B; kinase activity of PIP5K1C is required; interaction is regulated by phosphatidylinositol 4,5-bisphosphate generated by PIP5K1C. Interacts with HGS; promotes HGS ubiquitination. Interacts with SNX5. Interacts with SLC3A2 and SLC7A5; recruits SLC3A2 and SLC7A5 to lysosomes to promote leucine uptake into these organelles and is required for mTORC1 activation. Interacts with LRRC32; decreases TGFB1 production in regulatory T cells. Interacts with BECN1; competes with EGFR for LAPTM4B binding; regulates EGFR activity. Interacts with EGFR; positively correlates with EGFR activation. Post-translationally, undergoes proteolytic cleavage following delivery to the lysosomes. Ubiquitinated by NEDD4.

The protein resides in the endomembrane system. It localises to the late endosome membrane. Its subcellular location is the cell membrane. The protein localises to the cell projection. It is found in the lysosome membrane. The protein resides in the endosome membrane. It localises to the endosome. Its subcellular location is the multivesicular body membrane. The protein localises to the multivesicular body lumen. In terms of biological role, required for optimal lysosomal function. Blocks EGF-stimulated EGFR intraluminal sorting and degradation. Conversely by binding with the phosphatidylinositol 4,5-bisphosphate, regulates its PIP5K1C interaction, inhibits HGS ubiquitination and relieves LAPTM4B inhibition of EGFR degradation. Recruits SLC3A2 and SLC7A5 (the Leu transporter) to the lysosome, promoting entry of leucine and other essential amino acid (EAA) into the lysosome, stimulating activation of proton-transporting vacuolar (V)-ATPase protein pump (V-ATPase) and hence mTORC1 activation. Plays a role as negative regulator of TGFB1 production in regulatory T cells. Binds ceramide and facilitates its exit from late endosome in order to control cell death pathways. This chain is Lysosomal-associated transmembrane protein 4B, found in Rattus norvegicus (Rat).